Reading from the N-terminus, the 388-residue chain is Phosphopentomutase (388 aa).

Mn(2+) is bound by residues Asp10, Asp282, His287, Asp323, His324, and His335.

Belongs to the phosphopentomutase family. Mn(2+) serves as cofactor.

Its subcellular location is the cytoplasm. The enzyme catalyses 2-deoxy-alpha-D-ribose 1-phosphate = 2-deoxy-D-ribose 5-phosphate. It carries out the reaction alpha-D-ribose 1-phosphate = D-ribose 5-phosphate. The protein operates within carbohydrate degradation; 2-deoxy-D-ribose 1-phosphate degradation; D-glyceraldehyde 3-phosphate and acetaldehyde from 2-deoxy-alpha-D-ribose 1-phosphate: step 1/2. In terms of biological role, isomerase that catalyzes the conversion of deoxy-ribose 1-phosphate (dRib-1-P) and ribose 1-phosphate (Rib-1-P) to deoxy-ribose 5-phosphate (dRib-5-P) and ribose 5-phosphate (Rib-5-P), respectively. This is Phosphopentomutase from Desulfitobacterium hafniense (strain DSM 10664 / DCB-2).